An 896-amino-acid chain; its full sequence is Translation initiation factor IF-2 (896 aa).

The span at 93–219 (VKRDPQEAER…RMAEENEKNW (127 aa)) shows a compositional bias: basic and acidic residues. Residues 93 to 307 (VKRDPQEAER…GSALQQGFQK (215 aa)) form a disordered region. Basic residues predominate over residues 256 to 271 (GRSRSSKAARPAKKGN). Basic and acidic residues predominate over residues 272–285 (KHAESKADREEARA). Residues 395-564 (PRAPVVTIMG…LLQAEVLELK (170 aa)) form the tr-type G domain. A G1 region spans residues 404–411 (GHVDHGKT). 404–411 (GHVDHGKT) serves as a coordination point for GTP. The segment at 429-433 (GITQH) is G2. The interval 450-453 (DTPG) is G3. GTP contacts are provided by residues 450-454 (DTPGH) and 504-507 (NKID). Positions 504–507 (NKID) are G4. The segment at 540–542 (SAK) is G5.

It belongs to the TRAFAC class translation factor GTPase superfamily. Classic translation factor GTPase family. IF-2 subfamily.

The protein resides in the cytoplasm. One of the essential components for the initiation of protein synthesis. Protects formylmethionyl-tRNA from spontaneous hydrolysis and promotes its binding to the 30S ribosomal subunits. Also involved in the hydrolysis of GTP during the formation of the 70S ribosomal complex. This is Translation initiation factor IF-2 from Klebsiella pneumoniae (strain 342).